The following is a 153-amino-acid chain: Interleukin-17A (153 aa).

The first 23 residues, 1-23 (MASMRTSSMSLLLLLSLVALVKA), serve as a signal peptide directing secretion. The N-linked (GlcNAc...) asparagine glycan is linked to Asn53. Positions 56–76 (TNSRRPTDYHKRSTSPWTLHR) are disordered. 2 disulfides stabilise this stretch: Cys92/Cys142 and Cys97/Cys144.

The protein belongs to the IL-17 family. In terms of assembly, homodimer. Forms complexes with IL17RA and IL17RC receptors with 2:1 binding stoichiometry: two receptor chains for one interleukin molecule. IL17A homodimer preferentially drives the formation of IL17RA-IL17RC heterodimeric receptor complex. IL17A homodimer adopts an asymmetrical ternary structure with one IL17RA molecule, allowing for high affinity interactions of one IL17A monomer with one IL17RA molecule (via D1 and D2 domains), while disfavoring binding of a second IL17RA molecule on the other IL17A monomer. Heterodimer with IL17F. IL17A-IL17F forms complexes with IL17RA-IL17RC, but with lower affinity when compared to IL17A homodimer. IL17RA and IL17RC chains cannot distinguish between IL17A and IL17F molecules, potentially enabling the formation of topologically distinct complexes.

Its subcellular location is the secreted. In terms of biological role, effector cytokine of innate and adaptive immune system involved in antimicrobial host defense and maintenance of tissue integrity. Signals via IL17RA-IL17RC heterodimeric receptor complex, triggering homotypic interaction of IL17RA and IL17RC chains with TRAF3IP2 adapter. This leads to downstream TRAF6-mediated activation of NF-kappa-B and MAPkinase pathways ultimately resulting in transcriptional activation of cytokines, chemokines, antimicrobial peptides and matrix metalloproteinases, with potential strong immune inflammation. Plays an important role in connecting T cell-mediated adaptive immunity and acute inflammatory response to destroy extracellular bacteria and fungi. As a signature effector cytokine of T-helper 17 cells (Th17), primarily induces neutrophil activation and recruitment at infection and inflammatory sites. In airway epithelium, mediates neutrophil chemotaxis via induction of CXCL1 and CXCL5 chemokines. In secondary lymphoid organs, contributes to germinal center formation by regulating the chemotactic response of B cells to CXCL12 and CXCL13, enhancing retention of B cells within the germinal centers, B cell somatic hypermutation rate and selection toward plasma cells. Effector cytokine of a subset of gamma-delta T cells that functions as part of an inflammatory circuit downstream IL1B, TLR2 and IL23A-IL12B to promote neutrophil recruitment for efficient bacterial clearance. Effector cytokine of innate immune cells including invariant natural killer cell (iNKT) and group 3 innate lymphoid cells that mediate initial neutrophilic inflammation. Involved in the maintenance of the integrity of epithelial barriers during homeostasis and pathogen infection. Upon acute injury, has a direct role in epithelial barrier formation by regulating OCLN localization and tight junction biogenesis. As part of the mucosal immune response induced by commensal bacteria, enhances host's ability to resist pathogenic bacterial and fungal infections by promoting neutrophil recruitment and antimicrobial peptides release. In synergy with IL17F, mediates the production of antimicrobial beta-defensins DEFB1, DEFB103A, and DEFB104A by mucosal epithelial cells, limiting the entry of microbes through the epithelial barriers. Involved in antiviral host defense through various mechanisms. Enhances immunity against West Nile virus by promoting T cell cytotoxicity. May play a beneficial role in influenza A virus (H5N1) infection by enhancing B cell recruitment and immune response in the lung. Contributes to influenza A virus (H1N1) clearance by driving the differentiation of B-1a B cells, providing for production of virus-specific IgM antibodies at first line of host defense. The sequence is that of Interleukin-17A (IL17A) from Bos taurus (Bovine).